The following is a 397-amino-acid chain: tRNA(Met) cytidine acetate ligase (397 aa).

ATP is bound by residues 7–20 (VTEY…HIYH), G101, N152, and R177.

The protein belongs to the TmcAL family.

The protein localises to the cytoplasm. The enzyme catalyses cytidine(34) in elongator tRNA(Met) + acetate + ATP = N(4)-acetylcytidine(34) in elongator tRNA(Met) + AMP + diphosphate. In terms of biological role, catalyzes the formation of N(4)-acetylcytidine (ac(4)C) at the wobble position of elongator tRNA(Met), using acetate and ATP as substrates. First activates an acetate ion to form acetyladenylate (Ac-AMP) and then transfers the acetyl group to tRNA to form ac(4)C34. The protein is tRNA(Met) cytidine acetate ligase of Leuconostoc citreum (strain KM20).